Here is a 305-residue protein sequence, read N- to C-terminus: MELIFLGTSAGVPTRTRNVTAILLNLQHPTQSGLWLFDCGEGTQHQLLHTTFNPGKLDKIFISHLHGDHLFGLPGLLCSRSMSGIIQPLTIYGPQGIREFVETALRISGSWIDYPLEIVEIGAGEILDDGLRKVTAYPLEHPLECYGYRIEEHDKPGALNAQALKAAGVPPGPLFQALKAGKTIMLEDGRQINGADYLAAPVPGKALAIFGDTGPCDAALDLAKGVDVMVHEATLDITMEAKANSRGHSSTRQAATLAREAGVGKLIITHVSSRYDDKGCQHLLRECRSIFPATELANDFTVFNV.

Zn(2+)-binding residues include H64, H66, D68, H69, H141, D212, and H270. D68 (proton acceptor) is an active-site residue.

The protein belongs to the RNase Z family. RNase BN subfamily. As to quaternary structure, homodimer. Zn(2+) serves as cofactor.

Zinc phosphodiesterase, which has both exoribonuclease and endoribonuclease activities. The polypeptide is Ribonuclease BN (Escherichia coli O17:K52:H18 (strain UMN026 / ExPEC)).